The primary structure comprises 432 residues: Gamma-glutamyl phosphate reductase (432 aa).

This sequence belongs to the gamma-glutamyl phosphate reductase family.

It localises to the cytoplasm. The catalysed reaction is L-glutamate 5-semialdehyde + phosphate + NADP(+) = L-glutamyl 5-phosphate + NADPH + H(+). Its pathway is amino-acid biosynthesis; L-proline biosynthesis; L-glutamate 5-semialdehyde from L-glutamate: step 2/2. Catalyzes the NADPH-dependent reduction of L-glutamate 5-phosphate into L-glutamate 5-semialdehyde and phosphate. The product spontaneously undergoes cyclization to form 1-pyrroline-5-carboxylate. The protein is Gamma-glutamyl phosphate reductase of Clavibacter michiganensis subsp. michiganensis (strain NCPPB 382).